The following is a 159-amino-acid chain: Ribonuclease H (159 aa).

Positions 1–142 (MHKQVEIFTD…CDELAKAAAQ (142 aa)) constitute an RNase H type-1 domain. Positions 10, 48, 70, and 134 each coordinate Mg(2+). Residues 135-159 (ELAKAAAQSPTKEDTGYLESQQDKT) form a disordered region. Residues 145 to 159 (TKEDTGYLESQQDKT) show a composition bias toward basic and acidic residues.

Belongs to the RNase H family. Monomer. Mg(2+) is required as a cofactor.

The protein resides in the cytoplasm. It carries out the reaction Endonucleolytic cleavage to 5'-phosphomonoester.. Endonuclease that specifically degrades the RNA of RNA-DNA hybrids. This Proteus mirabilis (strain HI4320) protein is Ribonuclease H.